The chain runs to 623 residues: Xaa-Pro aminopeptidase 1 (623 aa).

R77 contributes to the a peptide binding site. N6-acetyllysine is present on K304. H395 lines the a peptide pocket. The Mn(2+) site is built by D415, D426, and H489. A peptide is bound by residues H489, H498, and E523. E523 and E537 together coordinate Mn(2+).

The protein belongs to the peptidase M24B family. Homodimer. Mn(2+) is required as a cofactor.

It localises to the cytoplasm. The protein resides in the cytosol. The catalysed reaction is Release of any N-terminal amino acid, including proline, that is linked to proline, even from a dipeptide or tripeptide.. Its function is as follows. Metalloaminopeptidase that catalyzes the removal of a penultimate prolyl residue from the N-termini of peptides, such as Arg-Pro-Pro. Contributes to the degradation of bradykinin. The polypeptide is Xaa-Pro aminopeptidase 1 (Mus musculus (Mouse)).